Consider the following 346-residue polypeptide: NADH-ubiquinone oxidoreductase chain 2 (346 aa).

11 consecutive transmembrane segments (helical) span residues 1 to 21 (MNPHATPVLVLSLALGTTITI), 25 to 45 (HWVLAWTGLEINTLAIIPLIS), 60 to 80 (FLTQAAASALVLFSSMTNAWA), 95 to 115 (CLLLTAAIAIKLGLVPFHFWF), 124 to 144 (LMTALLLSTLMKFPPLTLLLM), 149 to 169 (LNPALLTTMALASAALGGWMG), 178 to 195 (ILAFSSISHLGWIAIILV), 200 to 219 (LALLTFYLYAIMTSAVFMAL), 242 to 262 (ATLMLVLLSLAGLPPLTGFMP), 274 to 294 (EMTPAAMAIAMLSLLSLFFYL), and 326 to 346 (AILASLSILLLPLSPMIHAIV).

It belongs to the complex I subunit 2 family.

Its subcellular location is the mitochondrion inner membrane. The enzyme catalyses a ubiquinone + NADH + 5 H(+)(in) = a ubiquinol + NAD(+) + 4 H(+)(out). Its function is as follows. Core subunit of the mitochondrial membrane respiratory chain NADH dehydrogenase (Complex I) that is believed to belong to the minimal assembly required for catalysis. Complex I functions in the transfer of electrons from NADH to the respiratory chain. The immediate electron acceptor for the enzyme is believed to be ubiquinone. The sequence is that of NADH-ubiquinone oxidoreductase chain 2 (MT-ND2) from Mareca falcata (Falcated duck).